The sequence spans 711 residues: Polyribonucleotide nucleotidyltransferase (711 aa).

Mg(2+) contacts are provided by D486 and D492. A KH domain is found at 553 to 612 (PRIHTIKINPDKIKDVIGKGGSVIRALTEETGTTIEIEDDGTVKIAATDGEKAKHAIRRI). An S1 motif domain is found at 622-690 (GRVYTGKVTR…RQGRIRLSIK (69 aa)). The tract at residues 689–711 (IKEATEQSQPAAAPEAPAAEQGE) is disordered. Residues 694–711 (EQSQPAAAPEAPAAEQGE) are compositionally biased toward low complexity.

Belongs to the polyribonucleotide nucleotidyltransferase family. In terms of assembly, component of the RNA degradosome, which is a multiprotein complex involved in RNA processing and mRNA degradation. Mg(2+) serves as cofactor.

It is found in the cytoplasm. It carries out the reaction RNA(n+1) + phosphate = RNA(n) + a ribonucleoside 5'-diphosphate. In terms of biological role, involved in mRNA degradation. Catalyzes the phosphorolysis of single-stranded polyribonucleotides processively in the 3'- to 5'-direction. This Shigella flexneri serotype 5b (strain 8401) protein is Polyribonucleotide nucleotidyltransferase.